The primary structure comprises 110 residues: uncharacterized protein (110 aa).

The segment at 85 to 110 is disordered; that stretch reads ARKAERPSQGGKDYNGTAKSAQSTTV. Residues 101–110 show a composition bias toward polar residues; sequence TAKSAQSTTV.

This is an uncharacterized protein from Saccharomyces cerevisiae (strain ATCC 204508 / S288c) (Baker's yeast).